The primary structure comprises 225 residues: Uridylate kinase (225 aa).

Position 9–10 (9–10 (GS)) interacts with ATP. Gly44 serves as a coordination point for UMP. ATP contacts are provided by Gly45 and Arg49. UMP is bound by residues Asp66 and 114–120 (THPGHTT). 4 residues coordinate ATP: Thr140, Asn141, Tyr146, and Asp149.

It belongs to the UMP kinase family. Homohexamer.

It is found in the cytoplasm. It carries out the reaction UMP + ATP = UDP + ADP. It functions in the pathway pyrimidine metabolism; CTP biosynthesis via de novo pathway; UDP from UMP (UMPK route): step 1/1. Inhibited by UTP. Catalyzes the reversible phosphorylation of UMP to UDP. The protein is Uridylate kinase of Thermococcus sibiricus (strain DSM 12597 / MM 739).